The sequence spans 636 residues: DNA gyrase subunit B (636 aa).

Residues T421–P535 enclose the Toprim domain. The Mg(2+) site is built by E427, D500, and D502.

The protein belongs to the type II topoisomerase GyrB family. As to quaternary structure, heterotetramer, composed of two GyrA and two GyrB chains. In the heterotetramer, GyrA contains the active site tyrosine that forms a transient covalent intermediate with DNA, while GyrB binds cofactors and catalyzes ATP hydrolysis. Requires Mg(2+) as cofactor. It depends on Mn(2+) as a cofactor. Ca(2+) is required as a cofactor.

The protein resides in the cytoplasm. It catalyses the reaction ATP-dependent breakage, passage and rejoining of double-stranded DNA.. A type II topoisomerase that negatively supercoils closed circular double-stranded (ds) DNA in an ATP-dependent manner to modulate DNA topology and maintain chromosomes in an underwound state. Negative supercoiling favors strand separation, and DNA replication, transcription, recombination and repair, all of which involve strand separation. Also able to catalyze the interconversion of other topological isomers of dsDNA rings, including catenanes and knotted rings. Type II topoisomerases break and join 2 DNA strands simultaneously in an ATP-dependent manner. The polypeptide is DNA gyrase subunit B (Thermotoga maritima (strain ATCC 43589 / DSM 3109 / JCM 10099 / NBRC 100826 / MSB8)).